A 62-amino-acid chain; its full sequence is Photosystem II reaction center protein Z (62 aa).

The next 2 membrane-spanning stretches (helical) occupy residues 8-28 (AVFA…VVFA) and 41-61 (FSGT…NSLI).

It belongs to the PsbZ family. As to quaternary structure, PSII is composed of 1 copy each of membrane proteins PsbA, PsbB, PsbC, PsbD, PsbE, PsbF, PsbH, PsbI, PsbJ, PsbK, PsbL, PsbM, PsbT, PsbY, PsbZ, Psb30/Ycf12, at least 3 peripheral proteins of the oxygen-evolving complex and a large number of cofactors. It forms dimeric complexes.

The protein resides in the plastid. It is found in the chloroplast thylakoid membrane. Functionally, may control the interaction of photosystem II (PSII) cores with the light-harvesting antenna, regulates electron flow through the 2 photosystem reaction centers. PSII is a light-driven water plastoquinone oxidoreductase, using light energy to abstract electrons from H(2)O, generating a proton gradient subsequently used for ATP formation. The polypeptide is Photosystem II reaction center protein Z (Jasminum nudiflorum (Winter jasmine)).